A 184-amino-acid polypeptide reads, in one-letter code: Large ribosomal subunit protein uL5c (184 aa).

It belongs to the universal ribosomal protein uL5 family. As to quaternary structure, part of the 50S ribosomal subunit; contacts the 5S rRNA.

It localises to the plastid. The protein resides in the chloroplast. Functionally, binds 5S rRNA, forms part of the central protuberance of the 50S subunit. The sequence is that of Large ribosomal subunit protein uL5c (rpl5) from Nephroselmis olivacea (Green alga).